The following is a 283-amino-acid chain: Bifunctional protein FolD (283 aa).

Residues Gly166 to Ser168, Ser191, and Thr232 each bind NADP(+).

Belongs to the tetrahydrofolate dehydrogenase/cyclohydrolase family. Homodimer.

It carries out the reaction (6R)-5,10-methylene-5,6,7,8-tetrahydrofolate + NADP(+) = (6R)-5,10-methenyltetrahydrofolate + NADPH. The enzyme catalyses (6R)-5,10-methenyltetrahydrofolate + H2O = (6R)-10-formyltetrahydrofolate + H(+). The protein operates within one-carbon metabolism; tetrahydrofolate interconversion. In terms of biological role, catalyzes the oxidation of 5,10-methylenetetrahydrofolate to 5,10-methenyltetrahydrofolate and then the hydrolysis of 5,10-methenyltetrahydrofolate to 10-formyltetrahydrofolate. This Halothermothrix orenii (strain H 168 / OCM 544 / DSM 9562) protein is Bifunctional protein FolD.